The sequence spans 784 residues: Homoaconitase, mitochondrial (784 aa).

The N-terminal 32 residues, Met-1–Ser-32, are a transit peptide targeting the mitochondrion. [4Fe-4S] cluster-binding residues include Cys-399, Cys-468, and Cys-471. The disordered stretch occupies residues Glu-572–Thr-596. Over residues Glu-578–Ser-589 the composition is skewed to low complexity.

It belongs to the aconitase/IPM isomerase family. It depends on [4Fe-4S] cluster as a cofactor.

It localises to the mitochondrion. It carries out the reaction (2R,3S)-homoisocitrate = cis-homoaconitate + H2O. It participates in amino-acid biosynthesis; L-lysine biosynthesis via AAA pathway; L-alpha-aminoadipate from 2-oxoglutarate: step 3/5. Catalyzes the reversible hydration of cis-homoaconitate to (2R,3S)-homoisocitrate, a step in the alpha-aminoadipate pathway for lysine biosynthesis. This is Homoaconitase, mitochondrial (lys-4) from Neurospora crassa (strain ATCC 24698 / 74-OR23-1A / CBS 708.71 / DSM 1257 / FGSC 987).